The following is a 99-amino-acid chain: Integration host factor subunit beta (99 aa).

Belongs to the bacterial histone-like protein family. As to quaternary structure, heterodimer of an alpha and a beta chain.

Its function is as follows. This protein is one of the two subunits of integration host factor, a specific DNA-binding protein that functions in genetic recombination as well as in transcriptional and translational control. The sequence is that of Integration host factor subunit beta from Laribacter hongkongensis (strain HLHK9).